The primary structure comprises 500 residues: L-arabinose isomerase (500 aa).

The Mn(2+) site is built by glutamate 306, glutamate 333, histidine 350, and histidine 450.

This sequence belongs to the arabinose isomerase family. As to quaternary structure, homohexamer. The cofactor is Mn(2+).

It catalyses the reaction beta-L-arabinopyranose = L-ribulose. It participates in carbohydrate degradation; L-arabinose degradation via L-ribulose; D-xylulose 5-phosphate from L-arabinose (bacterial route): step 1/3. In terms of biological role, catalyzes the conversion of L-arabinose to L-ribulose. In Escherichia coli O7:K1 (strain IAI39 / ExPEC), this protein is L-arabinose isomerase.